Here is a 343-residue protein sequence, read N- to C-terminus: Dehydrodolichyl diphosphate synthase complex subunit SRT1 (343 aa).

This sequence belongs to the UPP synthase family. As to quaternary structure, forms an active dehydrodolichyl diphosphate synthase complex with NUS1. Mg(2+) serves as cofactor.

The protein resides in the lipid droplet. It carries out the reaction n isopentenyl diphosphate + (2E,6E)-farnesyl diphosphate = a di-trans,poly-cis-polyprenyl diphosphate + n diphosphate. It functions in the pathway protein modification; protein glycosylation. Its function is as follows. With NUS1, forms the dehydrodolichyl diphosphate synthase (DDS) complex, an essential component of the dolichol monophosphate (Dol-P) biosynthetic machinery. Adds multiple copies of isopentenyl pyrophosphate (IPP) to farnesyl pyrophosphate (FPP) to produce dehydrodolichyl diphosphate (Dedol-PP), a precursor of dolichol which is utilized as a sugar carrier in protein glycosylation in the endoplasmic reticulum (ER). This chain is Dehydrodolichyl diphosphate synthase complex subunit SRT1, found in Saccharomyces cerevisiae (strain ATCC 204508 / S288c) (Baker's yeast).